We begin with the raw amino-acid sequence, 843 residues long: NADH-quinone oxidoreductase subunit G (843 aa).

One can recognise a 2Fe-2S ferredoxin-type domain in the interval 20–98 (DLVTLTIDGA…GMVVKTQLTS (79 aa)). Residues C54, C65, C68, and C82 each coordinate [2Fe-2S] cluster. The 40-residue stretch at 100 to 139 (VAEKAQHGVMELLLINHPLDCPVCDKGGECPLQNQAMSHG) folds into the 4Fe-4S His(Cys)3-ligated-type domain. Positions 116, 120, 123, 129, 169, 172, 175, 219, 245, 248, 252, and 280 each coordinate [4Fe-4S] cluster. Residues 238–294 (LISSPSVCEHCSGGCATRTDHRRGKVMRRLAANEPEVNEEWICDKGRFGFRYAQQRD) enclose the 4Fe-4S Mo/W bis-MGD-type domain.

The protein belongs to the complex I 75 kDa subunit family. It depends on [2Fe-2S] cluster as a cofactor. The cofactor is [4Fe-4S] cluster.

It carries out the reaction a quinone + NADH + 5 H(+)(in) = a quinol + NAD(+) + 4 H(+)(out). Functionally, NDH-1 shuttles electrons from NADH, via FMN and iron-sulfur (Fe-S) centers, to quinones in the respiratory chain. Couples the redox reaction to proton translocation (for every two electrons transferred, four hydrogen ions are translocated across the cytoplasmic membrane), and thus conserves the redox energy in a proton gradient. The sequence is that of NADH-quinone oxidoreductase subunit G (nuoG) from Streptomyces coelicolor (strain ATCC BAA-471 / A3(2) / M145).